A 108-amino-acid polypeptide reads, in one-letter code: uncharacterized protein (108 aa).

An HTH cro/C1-type domain is found at 20–74 (VRQRRTALILDQETLARRIGVSFQQIQKYERGRNRISASRLYDIAKALAVPIDYF). Positions 31 to 50 (QETLARRIGVSFQQIQKYER) form a DNA-binding region, H-T-H motif.

This is an uncharacterized protein from Rhodospirillum rubrum.